Reading from the N-terminus, the 1167-residue chain is PH and Rap-GAP domain-containing protein DDB_G0271806 (1167 aa).

PH domains lie at 35-140 and 165-257; these read NCVK…SSSL and HVYL…SRIP. Residues 95 to 160 are disordered; that stretch reads GIDNNNCTNS…TNANTNNGLS (66 aa). Low complexity predominate over residues 98–155; sequence NNNCTNSNSNNNNNNSDLIHLSAPSLSSSTSSTISPISSSSSLTTTTTTTTTTTNANT. Disordered regions lie at residues 335 to 361, 376 to 400, and 645 to 734; these read SGGG…GGSL, WRFS…STQV, and YSRS…LEPE. A compositionally biased stretch (low complexity) spans 340 to 351; sequence NNSSPSSLQSQQ. The span at 648–676 shows a compositional bias: polar residues; the sequence is SEPNLQSCLSSSPSTRETMVPSSPSSHQL. The span at 687–732 shows a compositional bias: low complexity; that stretch reads EQQLSSSSSSSSQQLQLQLQQQEQEQLLQEQPEAEQSQPEPQPQLE. Residues 950–1162 form the Rap-GAP domain; the sequence is LLSFEERQTT…RTRESLLNYY (213 aa).

This Dictyostelium discoideum (Social amoeba) protein is PH and Rap-GAP domain-containing protein DDB_G0271806.